Here is a 783-residue protein sequence, read N- to C-terminus: Endonuclease MutS2 (783 aa).

328–335 (GPNTGGKT) is an ATP binding site. The Smr domain maps to 708-783 (LDLRGKRYEE…GSGCTIATLG (76 aa)).

Belongs to the DNA mismatch repair MutS family. MutS2 subfamily. As to quaternary structure, homodimer. Binds to stalled ribosomes, contacting rRNA.

Endonuclease that is involved in the suppression of homologous recombination and thus may have a key role in the control of bacterial genetic diversity. Its function is as follows. Acts as a ribosome collision sensor, splitting the ribosome into its 2 subunits. Detects stalled/collided 70S ribosomes which it binds and splits by an ATP-hydrolysis driven conformational change. Acts upstream of the ribosome quality control system (RQC), a ribosome-associated complex that mediates the extraction of incompletely synthesized nascent chains from stalled ribosomes and their subsequent degradation. Probably generates substrates for RQC. In Streptococcus thermophilus (strain CNRZ 1066), this protein is Endonuclease MutS2.